Reading from the N-terminus, the 103-residue chain is Pro-glucagon (103 aa).

Belongs to the glucagon family.

The protein localises to the secreted. Its function is as follows. Plays a key role in glucose metabolism and homeostasis. Regulates blood glucose by increasing gluconeogenesis and decreasing glycolysis. The sequence is that of Pro-glucagon (gcg) from Aquarana catesbeiana (American bullfrog).